Reading from the N-terminus, the 131-residue chain is D-ribose pyranase (131 aa).

Catalysis depends on His-20, which acts as the Proton donor. Residues Asp-28, His-98, and 120–122 contribute to the substrate site; that span reads YAN.

Belongs to the RbsD / FucU family. RbsD subfamily. In terms of assembly, homodecamer.

It localises to the cytoplasm. It catalyses the reaction beta-D-ribopyranose = beta-D-ribofuranose. It participates in carbohydrate metabolism; D-ribose degradation; D-ribose 5-phosphate from beta-D-ribopyranose: step 1/2. Functionally, catalyzes the interconversion of beta-pyran and beta-furan forms of D-ribose. This chain is D-ribose pyranase, found in Clostridium perfringens (strain ATCC 13124 / DSM 756 / JCM 1290 / NCIMB 6125 / NCTC 8237 / Type A).